Reading from the N-terminus, the 354-residue chain is Transcription termination factor 3, mitochondrial (354 aa).

Residues 1–89 (MFCSALRNIL…SFNLAAYVNN (89 aa)) constitute a mitochondrion transit peptide.

The protein belongs to the mTERF family.

The protein localises to the mitochondrion. Its function is as follows. Binds promoter DNA and regulates initiation of transcription. Regulator of mitochondrial ribosome biogenesis and translation that is essential for development. Required for normal mitochondrial transcription and translation. Required for assembly of mitochondrial respiratory complexes and normal mitochondrial function. Maintains 16S rRNA levels and functions in mitochondrial ribosome assembly by regulating the biogenesis of the 39S ribosomal subunit. The protein is Transcription termination factor 3, mitochondrial of Drosophila melanogaster (Fruit fly).